Here is a 468-residue protein sequence, read N- to C-terminus: H(+)/Cl(-) exchange transporter ClcA (468 aa).

Residues 1-30 are Cytoplasmic-facing; sequence MSTRETFKISLLAKMPKDVINQFLSKDKTP. The helical transmembrane segment at 31–67 threads the bilayer; that stretch reads FSVLFLSLLVGILAGLVGTYFEQAVHLVSETRTDWLK. Residues 68-74 are Periplasmic-facing; that stretch reads SEIGSFL. The helical transmembrane segment at 75–98 threads the bilayer; sequence PLWLAAFLISAFLAFIGYFLVHRF. The short motif at 104–108 is the Selectivity filter part_1 element; the sequence is GSGIP. S105 contributes to the chloride binding site. The segment at residues 107-114 is an intramembrane region (helical); that stretch reads IPEIEGAM. The Cytoplasmic portion of the chain corresponds to 115–121; sequence DGMRPVR. Helical transmembrane passes span 122 to 139 and 146 to 164; these read WWRV…ALGS and EGPT…SDIF. Residues 144 to 148 carry the Selectivity filter part_2 motif; sequence GREGP. At 165–174 the chain is on the cytoplasmic side; that stretch reads RVKNEDTRHS. 2 consecutive intramembrane regions (helical) follow at residues 175 to 187 and 191 to 199; these read LLAA…LAAA and PLAGIMFVI. At 200 to 212 the chain is on the cytoplasmic side; sequence EEMRPQFRYTLIS. Residues 213-230 form a helical membrane-spanning segment; the sequence is VRAVIISAVAANIVFRVI. Residues 231-250 are Periplasmic-facing; it reads NGQDAVITMPQYDAPELSTL. The chain crosses the membrane as a helical span at residues 251-279; the sequence is GLFLLLGALFGVFGVLFNYLITLAQDLFV. Topologically, residues 280 to 285 are cytoplasmic; the sequence is KFHRND. The helical transmembrane segment at 286–307 threads the bilayer; sequence RKRYLLTGSMIGGCFGLLLLYV. Over 308–327 the chain is Periplasmic; the sequence is PELTGGGISLIPTITNGGYG. 2 helical membrane passes run 328–347 and 353–374; these read AGIL…LCFG and GIFA…LIAK. A Selectivity filter part_3 motif is present at residues 353 to 357; that stretch reads GIFAP. Chloride contacts are provided by I354 and F355. At 375–384 the chain is on the periplasmic side; sequence VWFPELNIEP. Residues 385–399 constitute an intramembrane region (helical); the sequence is GMFAIAGMGALFAAT. An intramembrane region (note=Loop between two helices) is located at residues 400–402; sequence VRA. Residues 403 to 414 constitute an intramembrane region (helical); the sequence is PITGILLVIEMT. An intramembrane region (note=Loop between two helices) is located at residues 415–419; it reads NNYHL. A helical transmembrane segment spans residues 420 to 436; sequence ILPLIITSLGAVIFAQL. The Cytoplasmic portion of the chain corresponds to 437-468; sequence LGGQPIYSQLLHRTLKNQKLQQQDLPPQSPNS. A chloride-binding site is contributed by Y443.

The protein belongs to the chloride channel (TC 2.A.49) family. ClcA subfamily. In terms of assembly, homodimer.

It is found in the cell inner membrane. The catalysed reaction is 2 chloride(in) + H(+)(out) = 2 chloride(out) + H(+)(in). Functionally, proton-coupled chloride transporter. Functions as antiport system and exchanges two chloride ions for 1 proton. Probably acts as an electrical shunt for an outwardly-directed proton pump that is linked to amino acid decarboxylation, as part of the extreme acid resistance (XAR) response. This is H(+)/Cl(-) exchange transporter ClcA from Vibrio cholerae serotype O1 (strain ATCC 39541 / Classical Ogawa 395 / O395).